We begin with the raw amino-acid sequence, 73 residues long: DNA-directed RNA polymerase subunit epsilon (73 aa).

The protein belongs to the RNA polymerase subunit epsilon family. As to quaternary structure, RNAP is composed of a core of 2 alpha, a beta and a beta' subunit. The core is associated with a delta subunit, and at least one of epsilon or omega. When a sigma factor is associated with the core the holoenzyme is formed, which can initiate transcription.

The enzyme catalyses RNA(n) + a ribonucleoside 5'-triphosphate = RNA(n+1) + diphosphate. Its function is as follows. A non-essential component of RNA polymerase (RNAP). The sequence is that of DNA-directed RNA polymerase subunit epsilon from Lactobacillus helveticus (strain DPC 4571).